We begin with the raw amino-acid sequence, 66 residues long: Large ribosomal subunit protein bL35 (66 aa).

The protein belongs to the bacterial ribosomal protein bL35 family.

The protein is Large ribosomal subunit protein bL35 of Borreliella burgdorferi (strain ATCC 35210 / DSM 4680 / CIP 102532 / B31) (Borrelia burgdorferi).